A 432-amino-acid polypeptide reads, in one-letter code: MEFYLSSDCASLARYVSKVVYLEDNDIAHIYDGELHIHCSKIGSEDFSFRTVQKLELELSKIKKGPYDNFMQKEIYEQCETTKNVMRGRVDAFTNRVVLGGLENWLTELRRAKRIIMIASKASFHSCLAARPIFEELMEVPVNVELALDFVDRNCCIFRNDVCIFVSRSGETTDTINALNYCIKKEAVTIGVVNCSGSSISRFTHCGVHTNTGPEKGIATTKSYTSQYIALVMIALWMSEDLVSKIERRKEIIQALTIVPSQIKEVLELEPLIIELCDKKLKQHDTFLLLGRGYQFASALEGASKMKEISYVHSESILTNELGHRVLAVASDNPPIIAFATKDAFSPKIASCIDQIIERKGNPIIICNKGHKIWEQDKQKGNVVTLEVPQTVDCLQGILNVIPLQLISYWLAIKKDIGVDLPRDSAMSAPDI.

2 consecutive SIS domains span residues 105–244 (WLTE…DLVS) and 277–422 (CDKK…VDLP).

This is an uncharacterized protein from Saccharomyces cerevisiae (strain ATCC 204508 / S288c) (Baker's yeast).